Consider the following 92-residue polypeptide: Small ribosomal subunit protein uS19 (92 aa).

This sequence belongs to the universal ribosomal protein uS19 family.

Its function is as follows. Protein S19 forms a complex with S13 that binds strongly to the 16S ribosomal RNA. This Macrococcus caseolyticus (strain JCSC5402) (Macrococcoides caseolyticum) protein is Small ribosomal subunit protein uS19.